The primary structure comprises 737 residues: Transcription termination factor Rho (737 aa).

The interval 1 to 396 (MSGPCSAHRV…ENSYLPDPTD (396 aa)) is disordered. 3 stretches are compositionally biased toward low complexity: residues 16–28 (RPTIRSPRITRSS), 62–86 (ASRASSESRSESGSGLSAEGSGSDA), and 101–111 (DAESAPTAADT). 4 stretches are compositionally biased toward basic and acidic residues: residues 145–175 (PRAESPRSEPRTESRPEPRAENGSETRHESR), 196–256 (SMER…DRRD), 266–279 (GRPDNRGPGGDRHQ), and 286–324 (DRSHDRGPDRNNERAFDRPERPDRQGESSDRFDSQDRGG). A compositionally biased stretch (basic residues) spans 328 to 339 (RNGRRGRNRFRR). Residues 347 to 360 (APISGSHAPSQGSP) are compositionally biased toward polar residues. A Rho RNA-BD domain is found at 367-439 (EGTMAGWFDP…IEVQTLNDGS (73 aa)). Positions 376-387 (PSRDGGFLRRPE) are enriched in basic and acidic residues. ATP is bound by residues 487–492 (GYGQRA), 499–504 (RAGKTT), and Arg-530.

This sequence belongs to the Rho family. In terms of assembly, homohexamer. The homohexamer assembles into an open ring structure.

Its function is as follows. Facilitates transcription termination by a mechanism that involves Rho binding to the nascent RNA, activation of Rho's RNA-dependent ATPase activity, and release of the mRNA from the DNA template. In Gemmatimonas aurantiaca (strain DSM 14586 / JCM 11422 / NBRC 100505 / T-27), this protein is Transcription termination factor Rho.